The chain runs to 283 residues: BTB/POZ domain-containing protein KCTD15 (283 aa).

The interval 1-32 (MPHRKERPSGSSLHTHGSTGTAEGGNMSRLSL) is disordered. The segment covering 9–21 (SGSSLHTHGSTGT) has biased composition (low complexity). Phosphoserine occurs at positions 31, 35, and 38. The region spanning 56 to 126 (APVHIDVGGH…LRTSKLLLPD (71 aa)) is the BTB domain.

In terms of assembly, forms oligomers, predominantly homopentamers. Interacts with KCTD1, probably forming heteropentamers depending on its abundance in a cell-type dependent manner. Interacts with TFAP2A; this interaction inhibits TFAP2A transcriptional activation.

The protein localises to the nucleus. During embryonic development, it is involved in neural crest formation. Inhibits AP2 transcriptional activity by interaction with its activation domain. This chain is BTB/POZ domain-containing protein KCTD15 (KCTD15), found in Homo sapiens (Human).